The chain runs to 384 residues: Probable fructokinase-6, chloroplastic (384 aa).

The N-terminal 46 residues, 1-46 (MALQATTTTFCFSGPTFRSTPHSLTSKRPISIKATTSSPSRLSNSR), are a transit peptide targeting the chloroplast. A disordered region spans residues 34 to 61 (ATTSSPSRLSNSRSNLKGRALSSDGSTQ). Over residues 35–48 (TTSSPSRLSNSRSN) the composition is skewed to low complexity.

Belongs to the carbohydrate kinase PfkB family.

It is found in the plastid. The protein resides in the chloroplast. The catalysed reaction is D-fructose + ATP = D-fructose 6-phosphate + ADP + H(+). It participates in glycan biosynthesis; starch biosynthesis. May play an important role in maintaining the flux of carbon towards starch formation. The polypeptide is Probable fructokinase-6, chloroplastic (Arabidopsis thaliana (Mouse-ear cress)).